The sequence spans 497 residues: Glycerol kinase (497 aa).

ADP is bound at residue Thr12. ATP contacts are provided by Thr12, Thr13, and Ser14. Thr12 provides a ligand contact to sn-glycerol 3-phosphate. Arg16 serves as a coordination point for ADP. The sn-glycerol 3-phosphate site is built by Arg82, Glu83, Tyr132, and Asp239. 5 residues coordinate glycerol: Arg82, Glu83, Tyr132, Asp239, and Gln240. Residues Thr261 and Gly303 each coordinate ADP. Thr261, Gly303, Gln307, and Gly402 together coordinate ATP. ADP is bound by residues Gly402 and Asn406.

It belongs to the FGGY kinase family. As to quaternary structure, homodimer.

The catalysed reaction is glycerol + ATP = sn-glycerol 3-phosphate + ADP + H(+). Its pathway is polyol metabolism; glycerol degradation via glycerol kinase pathway; sn-glycerol 3-phosphate from glycerol: step 1/1. Functionally, key enzyme in the regulation of glycerol uptake and metabolism. Catalyzes the phosphorylation of glycerol to yield sn-glycerol 3-phosphate. Can utilize other nucleoside triphosphates (GTP, CTP, UTP and ITP) as a phosphoryl donor. In Thermococcus kodakarensis (strain ATCC BAA-918 / JCM 12380 / KOD1) (Pyrococcus kodakaraensis (strain KOD1)), this protein is Glycerol kinase.